We begin with the raw amino-acid sequence, 377 residues long: Succinyl-diaminopimelate desuccinylase (377 aa).

Histidine 66 is a Zn(2+) binding site. Aspartate 68 is an active-site residue. Aspartate 99 contributes to the Zn(2+) binding site. Residue glutamate 133 is the Proton acceptor of the active site. Residues glutamate 134, glutamate 162, and histidine 348 each contribute to the Zn(2+) site.

Belongs to the peptidase M20A family. DapE subfamily. In terms of assembly, homodimer. Requires Zn(2+) as cofactor. The cofactor is Co(2+).

It catalyses the reaction N-succinyl-(2S,6S)-2,6-diaminopimelate + H2O = (2S,6S)-2,6-diaminopimelate + succinate. The protein operates within amino-acid biosynthesis; L-lysine biosynthesis via DAP pathway; LL-2,6-diaminopimelate from (S)-tetrahydrodipicolinate (succinylase route): step 3/3. Catalyzes the hydrolysis of N-succinyl-L,L-diaminopimelic acid (SDAP), forming succinate and LL-2,6-diaminopimelate (DAP), an intermediate involved in the bacterial biosynthesis of lysine and meso-diaminopimelic acid, an essential component of bacterial cell walls. The chain is Succinyl-diaminopimelate desuccinylase from Xylella fastidiosa (strain 9a5c).